A 74-amino-acid polypeptide reads, in one-letter code: ATP synthase subunit c (74 aa).

The next 2 helical transmembrane spans lie at 8-28 (FIGV…VSNI) and 52-72 (IGAG…MLLI).

It belongs to the ATPase C chain family. As to quaternary structure, F-type ATPases have 2 components, F(1) - the catalytic core - and F(0) - the membrane proton channel. F(1) has five subunits: alpha(3), beta(3), gamma(1), delta(1), epsilon(1). F(0) has three main subunits: a(1), b(2) and c(10-14). The alpha and beta chains form an alternating ring which encloses part of the gamma chain. F(1) is attached to F(0) by a central stalk formed by the gamma and epsilon chains, while a peripheral stalk is formed by the delta and b chains.

It localises to the cell inner membrane. Its function is as follows. F(1)F(0) ATP synthase produces ATP from ADP in the presence of a proton or sodium gradient. F-type ATPases consist of two structural domains, F(1) containing the extramembraneous catalytic core and F(0) containing the membrane proton channel, linked together by a central stalk and a peripheral stalk. During catalysis, ATP synthesis in the catalytic domain of F(1) is coupled via a rotary mechanism of the central stalk subunits to proton translocation. Key component of the F(0) channel; it plays a direct role in translocation across the membrane. A homomeric c-ring of between 10-14 subunits forms the central stalk rotor element with the F(1) delta and epsilon subunits. The protein is ATP synthase subunit c of Rickettsia bellii (strain RML369-C).